The following is a 415-amino-acid chain: MNSFSSNEYSTEISTEALNNWQQLVEQRISLELEYAAKLAKLTKSIKAIKQCAPLNDLTKQVCVELMQCNKKHLEASRYFQTHVKEFMKEYVDRENKFSNETISKSSAAALMTSMENFILFTNPVYHNKLQVPSKSDMEIANSLKITQPAEKNSGTANPISAYSLEHAELDERNNQLSEALSMLRLSPFVNNYYPSYQNRKDGKSLMENRGVVLSVDTVTSPISQSPKKLTPTTSPINSTSLSFVDAKKPGSKWPSQYDFPKKTKSTEIPFKTLPSLNINNERELTKHKLPIVKPKLAVFPSNQATASTLQLAPPPVQAIPTLRNPVNLDDKKESLLKYYATHPTITPDGFPIFAYVRALYAYKATLPSEIDLNVDDTLVVLNRQKDGWWKGLVVSPTVGRIGLFPSNYIEELEY.

Phosphoserine occurs at positions 221 and 226. Threonine 231 bears the Phosphothreonine mark. The residue at position 235 (serine 235) is a Phosphoserine. The SH3 domain occupies 352–415 (PIFAYVRALY…PSNYIEELEY (64 aa)).

As to quaternary structure, interacts with ubp4.

It is found in the cytoplasm. It localises to the endosome. Its function is as follows. Required for the regulation of activity and recruitment of ubp4 to endosomes. The chain is Ubp4-interactor sfp47 (sfp47) from Schizosaccharomyces pombe (strain 972 / ATCC 24843) (Fission yeast).